Consider the following 487-residue polypeptide: Cyclic AMP-dependent transcription factor ATF-2 (487 aa).

The C2H2-type zinc finger occupies 7 to 31 (FLCTAPGCGQRFTNEDHLAVHKHKH). Residue Thr-34 is modified to Phosphothreonine; by PKC/PRKCH. Ser-44 carries the phosphoserine modification. At Thr-51 the chain carries Phosphothreonine; by MAPK11 and MAPK14. Thr-53 is modified (phosphothreonine; by MAPK1, MAPK3, MAPK11, MAPK12, MAPK14 and PLK3). Residue Thr-55 is modified to Phosphothreonine; by VRK1. Phosphoserine occurs at positions 72 and 94. A Phosphothreonine modification is found at Thr-98. Phosphoserine; by PKC/PRKCA and PKC/PRKCB is present on Ser-103. 2 disordered regions span residues 106–137 (EEPS…PLAQ) and 241–355 (PGIP…RQKR). Ser-118 is subject to Phosphoserine. Polar residues predominate over residues 264–275 (LTQQHPPVTNGD). The interval 278-281 (KGHG) is essential for its histone acetyltransferase activity. The span at 300-316 (PATSTTETPASPAHTTP) shows a compositional bias: low complexity. Ser-310 bears the Phosphoserine mark. Residue Ser-322 is modified to Phosphoserine; by PKC/PRKCA and PKC/PRKCB. Residues 328–345 (AANEDPDEKRRKFLERNR) are compositionally biased toward basic and acidic residues. Residues 334–397 (DEKRRKFLER…AQLKQLLLAH (64 aa)) enclose the bZIP domain. A basic motif region spans residues 336 to 356 (KRRKFLERNRAAASRCRQKRK). N6-acetyllysine is present on Lys-339. Phosphoserine; by PKC/PRKCA and PKC/PRKCB is present on Ser-349. An N6-acetyllysine modification is found at Lys-356. The segment at 362 to 390 (LEKKAEDLSSLNGQLQSEVTLLRNEVAQL) is leucine-zipper. Residues 387–396 (VAQLKQLLLA) carry the Nuclear export signal motif. A disordered region spans residues 407–453 (KKSGYHTADKDDSSEDLSVPSSPHTEAIQHSSVSTSNGVSSTSKAEA). Ser-424 and Ser-428 each carry phosphoserine. Residues 425 to 436 (VPSSPHTEAIQH) show a composition bias toward polar residues. A compositionally biased stretch (low complexity) spans 437–449 (SSVSTSNGVSSTS). Residues Ser-472 and Ser-480 each carry the phosphoserine; by ATM modification.

It belongs to the bZIP family. ATF subfamily. In terms of assembly, binds DNA as a dimer and can form a homodimer in the absence of DNA. Can form a heterodimer with JUN. Heterodimerization is essential for its transcriptional activity. Interacts with SMAD3 and SMAD4. Interacts with the HK1/VDAC1 complex. Interacts with NBN, MRE11, XPO1, KAT5 and CUL3. Binds through its N-terminal region to UTF1 which acts as a coactivator of ATF2 transcriptional activity. Post-translationally, phosphorylation of Thr-51 by MAPK14 and MAPK11, and at Thr-53 by MAPK1/ERK2, MAPK3/ERK1, MAPK11, MAPK12 and MAPK14 in response to external stimulus like insulin causes increased transcriptional activity. Phosphorylated by PLK3 following hyperosmotic stress. Also phosphorylated and activated by JNK and CaMK4. ATM-mediated phosphorylation at Ser-472 and Ser-480 stimulates its function in DNA damage response. Phosphorylation at Ser-44, Thr-55 and Ser-103 activates its transcriptional activity. Phosphorylation at Thr-51 or Thr-53 enhances acetylation of histones H2B and H4.

The protein resides in the nucleus. Its subcellular location is the cytoplasm. It is found in the mitochondrion outer membrane. In terms of biological role, transcriptional activator which regulates the transcription of various genes, including those involved in anti-apoptosis, cell growth, and DNA damage response. Dependent on its binding partner, binds to CRE (cAMP response element) consensus sequences (5'-TGACGTCA-3') or to AP-1 (activator protein 1) consensus sequences (5'-TGACTCA-3'). In the nucleus, contributes to global transcription and the DNA damage response, in addition to specific transcriptional activities that are related to cell development, proliferation and death. In the cytoplasm, interacts with and perturbs HK1- and VDAC1-containing complexes at the mitochondrial outer membrane, thereby impairing mitochondrial membrane potential, inducing mitochondrial leakage and promoting cell death. The phosphorylated form (mediated by ATM) plays a role in the DNA damage response and is involved in the ionizing radiation (IR)-induced S phase checkpoint control and in the recruitment of the MRN complex into the IR-induced foci (IRIF). Exhibits histone acetyltransferase (HAT) activity which specifically acetylates histones H2B and H4 in vitro. In concert with CUL3 and RBX1, promotes the degradation of KAT5 thereby attenuating its ability to acetylate and activate ATM. Can elicit oncogenic or tumor suppressor activities depending on the tissue or cell type. The polypeptide is Cyclic AMP-dependent transcription factor ATF-2 (Atf2) (Mus musculus (Mouse)).